Here is a 66-residue protein sequence, read N- to C-terminus: Alpha-conotoxin RegIIA (66 aa).

The signal sequence occupies residues 1 to 21 (MGMRMMFTVFLLVVLTTTVVS). The propeptide occupies 22–49 (STSVRASDGRNAAADNRASDLIAQIVRR). 2 cysteine pairs are disulfide-bonded: Cys-51–Cys-57 and Cys-52–Cys-65. The interval 53–55 (SHP) is ser-Xaa-Pro motif, crucial for potent interaction with nAChR. Residue Cys-65 is modified to Cysteine amide.

The protein belongs to the conotoxin A superfamily. Expressed by the venom duct.

It is found in the secreted. Alpha-conotoxins act on postsynaptic membranes, they bind to the nicotinic acetylcholine receptors (nAChR) and thus inhibit them. This toxin potently inhibits alpha-3 containing subunit nAChR. It inhibits alpha-3-beta-2/CHRNA3-CHRNB2 (IC(50)=10.7-33 nM (rat)/132.4-704.1 nM (human)) and alpha-3-beta-4/CHRNA3-CHRNB4 (IC(50)=47.3-97 nM (rat)/52.1 nM (human)). It also inhibits alpha-7/CHRNA7 nAChR with IC(50)=103-210 nM (human)/41-61.2 nM (rat) nAChRs. It is more potent on alpha-3-beta-2 receptors in human than in rat, due to a variation (Pro vs Gln) in alpha-3 subunit in these orthologs. Conversely, does not show species-specific differences in sensitivity at the alpha-3-beta-4 receptor. The protein is Alpha-conotoxin RegIIA of Conus regius (Crown cone).